Reading from the N-terminus, the 1072-residue chain is E3 ubiquitin-protein ligase RNF31 (1072 aa).

The segment at 1–485 (MPGEEEERAF…PEKQRQDKMR (485 aa)) is polyubiquitin-binding. The region spanning 71–142 (TLSTALNILE…SFPEGQEEPD (72 aa)) is the PUB domain. Residues 263–290 (QGTHLSPSLPASAQPRPQSTSLLALGDS) are disordered. A compositionally biased stretch (polar residues) spans 265–280 (THLSPSLPASAQPRPQ). Positions 281 to 290 (STSLLALGDS) are enriched in low complexity. RanBP2-type zinc fingers lie at residues 299–329 (SAHL…PRGC) and 350–379 (ARGR…PRLA). Serine 383 carries the post-translational modification Phosphoserine. A RanBP2-type 3 zinc finger spans residues 409 to 438 (QSQVWYCIHCTFCNSSPGWVCVMCNRTSSP). The interval 443–484 (HAPRPYASSLEKGPPKPGPPRRLSAPLPSSCGDPEKQRQDKM) is disordered. A compositionally biased stretch (low complexity) spans 463–472 (RRLSAPLPSS). The residue at position 466 (serine 466) is a Phosphoserine. The segment covering 475–484 (DPEKQRQDKM) has biased composition (basic and acidic residues). The interval 563–616 (GNLDEAVEECVRTRRRKVQELQSLGFGPEEGSLQALFQHGGDVSRALTELQRQR) is interaction with RBCK1. The UBA domain maps to 564-615 (NLDEAVEECVRTRRRKVQELQSLGFGPEEGSLQALFQHGGDVSRALTELQRQ). The tract at residues 695–929 (LAQECAVCGW…KSLHGHHPRD (235 aa)) is TRIAD supradomain. Positions 699, 702, 717, 719, 722, and 725 each coordinate Zn(2+). The segment at 699–749 (CAVCGWALPHNRMQALTSCECTICPDCFRQHFTIALKEKHITDMVCPACGR) adopts an RING-type 1 zinc-finger fold. Lysine 735 is covalently cross-linked ((Microbial infection) Glycyl lysine isopeptide (Lys-Gly) (interchain with G-Cter in ubiquitin)). Residues cysteine 744 and cysteine 747 each coordinate Zn(2+). Residues 779–841 (ALFHKKLTEG…WEEQHRGRSC (63 aa)) form an IBR-type zinc finger. A (Microbial infection) Glycyl lysine isopeptide (Lys-Gly) (interchain with G-Cter in ubiquitin) cross-link involves residue lysine 783. Zn(2+) contacts are provided by cysteine 799, cysteine 802, cysteine 817, cysteine 820, cysteine 825, cysteine 828, histidine 836, cysteine 841, cysteine 871, and cysteine 874. Residues 871–901 (CPKCKFSYALARGGCMHFHCTQCRHQFCSGC) form an RING-type 2; atypical zinc finger. A (Microbial infection) Glycyl lysine isopeptide (Lys-Gly) (interchain with G-Cter in ubiquitin) cross-link involves residue lysine 875. Cysteine 885 is an active-site residue. The Zn(2+) site is built by cysteine 890, cysteine 893, cysteine 898, cysteine 901, cysteine 916, and histidine 925. The tract at residues 910–1072 (KCPEPNCRVK…LGQSIPRRRK (163 aa)) is LDD domain.

The protein belongs to the RBR family. In terms of assembly, component of the LUBAC complex (linear ubiquitin chain assembly complex) which consists of SHARPIN, RBCK1 and RNF31. LUBAC has a MW of approximately 600 kDa suggesting a heteromultimeric assembly of its subunits. Associates with the TNF-R1 signaling complex (TNF-RSC) in a stimulation-dependent manner. Interacts (via the PUB domain) with OTULIN (via the PIM motif); the interaction is direct. Interacts (via the PUB domain) with VCP (via the PIM motif). Interacts (via the PUB domain) with SPATA2 (via the PIM motif); interaction is direct and bridges RNF31 and CYLD. Interacts with CYLD; the interaction is indirect and is mediated via SPATA2. Interacts with MUSK. Interacts with CARD11, promoting linear ubiquitination of BCL10. As to quaternary structure, (Microbial infection) Interacts with S.flexneri E3 ubiquitin-protein ligases IpaH1.4 and IpaH2.5, leading to its ubiquitination. Autoubiquitinated. Interaction with OTULIN is required to suppress formation of 'Met-1'-linked polyubiquitin chains and prevent subsequent inactivation of the LUBAC complex. Post-translationally, cleaved by caspase during apoptosis. In terms of processing, (Microbial infection) Ubiquitinated by S.flexneri E3 ubiquitin-protein ligases IpaH1.4 and IpaH2.5, leading to its degradation by the proteasome, thereby preventing formation of the bacterial ubiquitin coat and activation of innate immunity. Expressed in both normal and transformed breast epithelial cell lines.

The protein localises to the cytoplasm. The catalysed reaction is [E2 ubiquitin-conjugating enzyme]-S-ubiquitinyl-L-cysteine + [acceptor protein]-L-lysine = [E2 ubiquitin-conjugating enzyme]-L-cysteine + [acceptor protein]-N(6)-ubiquitinyl-L-lysine.. It participates in protein modification; protein ubiquitination. In terms of biological role, E3 ubiquitin-protein ligase component of the LUBAC complex which conjugates linear ('Met-1'-linked) polyubiquitin chains to substrates and plays a key role in NF-kappa-B activation and regulation of inflammation. LUBAC conjugates linear polyubiquitin to IKBKG and RIPK1 and is involved in activation of the canonical NF-kappa-B and the JNK signaling pathways. Linear ubiquitination mediated by the LUBAC complex interferes with TNF-induced cell death and thereby prevents inflammation. LUBAC is recruited to the TNF-R1 signaling complex (TNF-RSC) following polyubiquitination of TNF-RSC components by BIRC2 and/or BIRC3 and to conjugate linear polyubiquitin to IKBKG and possibly other components contributing to the stability of the complex. The LUBAC complex is also involved in innate immunity by conjugating linear polyubiquitin chains at the surface of bacteria invading the cytosol to form the ubiquitin coat surrounding bacteria. LUBAC is not able to initiate formation of the bacterial ubiquitin coat, and can only promote formation of linear polyubiquitins on pre-existing ubiquitin. Recruited to the surface of bacteria by RNF213, which initiates the bacterial ubiquitin coat. The bacterial ubiquitin coat acts as an 'eat-me' signal for xenophagy and promotes NF-kappa-B activation. Together with OTULIN, the LUBAC complex regulates the canonical Wnt signaling during angiogenesis. RNF31 is required for linear ubiquitination of BCL10, thereby promoting TCR-induced NF-kappa-B activation. Binds polyubiquitin of different linkage types. This chain is E3 ubiquitin-protein ligase RNF31, found in Homo sapiens (Human).